The primary structure comprises 207 residues: Ribosomal RNA large subunit methyltransferase E (207 aa).

The S-adenosyl-L-methionine site is built by Gly-60, Trp-62, Asp-80, Asp-96, and Asp-121. Catalysis depends on Lys-161, which acts as the Proton acceptor.

This sequence belongs to the class I-like SAM-binding methyltransferase superfamily. RNA methyltransferase RlmE family.

The protein localises to the cytoplasm. The enzyme catalyses uridine(2552) in 23S rRNA + S-adenosyl-L-methionine = 2'-O-methyluridine(2552) in 23S rRNA + S-adenosyl-L-homocysteine + H(+). Its function is as follows. Specifically methylates the uridine in position 2552 of 23S rRNA at the 2'-O position of the ribose in the fully assembled 50S ribosomal subunit. This is Ribosomal RNA large subunit methyltransferase E from Thioalkalivibrio sulfidiphilus (strain HL-EbGR7).